A 267-amino-acid polypeptide reads, in one-letter code: Type III pantothenate kinase (267 aa).

6 to 13 (DSGNSRLK) is a binding site for ATP. Residues Y96 and 103-106 (GADR) contribute to the substrate site. Catalysis depends on D105, which acts as the Proton acceptor. T131 serves as a coordination point for ATP. T181 serves as a coordination point for substrate.

Belongs to the type III pantothenate kinase family. As to quaternary structure, homodimer. The cofactor is NH4(+). K(+) is required as a cofactor.

It is found in the cytoplasm. It catalyses the reaction (R)-pantothenate + ATP = (R)-4'-phosphopantothenate + ADP + H(+). It functions in the pathway cofactor biosynthesis; coenzyme A biosynthesis; CoA from (R)-pantothenate: step 1/5. In terms of biological role, catalyzes the phosphorylation of pantothenate (Pan), the first step in CoA biosynthesis. In Bordetella bronchiseptica (strain ATCC BAA-588 / NCTC 13252 / RB50) (Alcaligenes bronchisepticus), this protein is Type III pantothenate kinase.